Consider the following 27-residue polypeptide: uncharacterized protein (27 aa).

This is an uncharacterized protein from Archaeoglobus fulgidus (strain ATCC 49558 / DSM 4304 / JCM 9628 / NBRC 100126 / VC-16).